Here is a 641-residue protein sequence, read N- to C-terminus: MPAITLPDGSVRRFDGPVTGTMVAESIGPGLARAALAMEVDGALVDLSREIADDASVRFITRKDDAALEMIRHDTAHVLAEAVQSLWPGTQVTIGPSIENGFYYDFYRNEPFTPEDFPAIEARMREIVAANARFEREVWPRDEAIRFFENRGERFKAELIRDLPESEPISIYRQGEWLDLCRGPHLRGTADVGSAFKLMKVAGAYWRGDHRNPMLTRIYGTAWRDQKELDAHLHRLEEAERRDHRRIGREMDLFHIQEEAVGSIFWHPKGWRLYTALQDYMRRAQTRGGYQEVRTPQLVDRALWEASGHWDKYREHMFIATVEDEDKTLALKPMNCPCHVQIFRHGLRSYRELPLRMAEFGACHRYEPSGALHGIMRVRSFTQDDAHIFCTESQIAAETARFVRMLAEVYADLGFESFRVKFADRPEQRAGSDETWDRAEGALIEACRLAGVEYEYNPGEGAFYGPKLEFVLRDAIGRDWQCGTLQVDYVLPERLDASFVGEDSARHRPVMLHRAILGSFERFLGILIEQHAGRFPLWLAPVQVVVASIVTDAAPYAEQVAETLTQAGLVVETDIRNEKINAKVREHSLARVPVILVVGRKEAEDGTVAIRRLGGAAQEVMSLADAATALAAEALPPDLRR.

A TGS domain is found at 1–61; the sequence is MPAITLPDGS…ADDASVRFIT (61 aa). The tract at residues 243 to 536 is catalytic; that stretch reads DHRRIGREMD…LIEQHAGRFP (294 aa). Residues Cys336, His387, and His513 each contribute to the Zn(2+) site.

Belongs to the class-II aminoacyl-tRNA synthetase family. Homodimer. Zn(2+) is required as a cofactor.

The protein localises to the cytoplasm. It carries out the reaction tRNA(Thr) + L-threonine + ATP = L-threonyl-tRNA(Thr) + AMP + diphosphate + H(+). Functionally, catalyzes the attachment of threonine to tRNA(Thr) in a two-step reaction: L-threonine is first activated by ATP to form Thr-AMP and then transferred to the acceptor end of tRNA(Thr). Also edits incorrectly charged L-seryl-tRNA(Thr). The sequence is that of Threonine--tRNA ligase from Gluconacetobacter diazotrophicus (strain ATCC 49037 / DSM 5601 / CCUG 37298 / CIP 103539 / LMG 7603 / PAl5).